The following is a 453-amino-acid chain: Bestrophin homolog 5 (453 aa).

A run of 4 helical transmembrane segments spans residues 78–98 (ELIVWICAYSLVSVIYRFALT), 113–133 (DARMGYLPLNFVLGFFCNIII), 275–295 (IPLMYPQLVNMAVHTYFFLCI), and 314–334 (LYIPFMTIIEFIFYMGWLKVA).

This sequence belongs to the anion channel-forming bestrophin (TC 1.A.46) family. Calcium-sensitive chloride channel subfamily. Forms oligomers.

Its subcellular location is the cell membrane. Functionally, forms chloride channels. This is Bestrophin homolog 5 (best-5) from Caenorhabditis elegans.